Here is an 843-residue protein sequence, read N- to C-terminus: DNA gyrase subunit A (843 aa).

Residues 61-528 enclose the Topo IIA-type catalytic domain; it reads LPDVRDGLKP…ESSTFNAEDL (468 aa). Residue Tyr-149 is the O-(5'-phospho-DNA)-tyrosine intermediate of the active site. The short motif at 555 to 561 is the GyrA-box element; it reads QKRGGKG.

The protein belongs to the type II topoisomerase GyrA/ParC subunit family. In terms of assembly, heterotetramer, composed of two GyrA and two GyrB chains. In the heterotetramer, GyrA contains the active site tyrosine that forms a transient covalent intermediate with DNA, while GyrB binds cofactors and catalyzes ATP hydrolysis.

It localises to the cytoplasm. The enzyme catalyses ATP-dependent breakage, passage and rejoining of double-stranded DNA.. Functionally, a type II topoisomerase that negatively supercoils closed circular double-stranded (ds) DNA in an ATP-dependent manner to modulate DNA topology and maintain chromosomes in an underwound state. Negative supercoiling favors strand separation, and DNA replication, transcription, recombination and repair, all of which involve strand separation. Also able to catalyze the interconversion of other topological isomers of dsDNA rings, including catenanes and knotted rings. Type II topoisomerases break and join 2 DNA strands simultaneously in an ATP-dependent manner. In Leptospira biflexa serovar Patoc (strain Patoc 1 / Ames), this protein is DNA gyrase subunit A.